Consider the following 377-residue polypeptide: Cilia- and flagella-associated protein 263 (377 aa).

Coiled-coil stretches lie at residues 95-243 (LTAD…NQEL) and 280-354 (LRKE…SLKG).

Belongs to the CFAP263 family. As to quaternary structure, forms a complex with CFAP184; the interaction is required for functional activity in cilia. Interacts with HAP1 and PCM1.

It localises to the cytoplasm. It is found in the cytoskeleton. Its subcellular location is the microtubule organizing center. The protein localises to the centrosome. The protein resides in the centriolar satellite. It localises to the cell projection. It is found in the cilium. Functionally, component of centriolar satellites contributing to primary cilium formation. In complex with CFAP263, acts as a regulator of ciliary beating that connects radial spoke 3 (RS3) to the inner dynein arm (IDA) and the nexin-dynein regulatory complex (N-DRC). The complex is positioned parallel to N-DRC and forms a connection between the arch at the base of RS3, the IDA tail and N-DRC. The polypeptide is Cilia- and flagella-associated protein 263 (Homo sapiens (Human)).